The following is a 117-amino-acid chain: UPF0342 protein lwe2240 (117 aa).

It belongs to the UPF0342 family.

The chain is UPF0342 protein lwe2240 from Listeria welshimeri serovar 6b (strain ATCC 35897 / DSM 20650 / CCUG 15529 / CIP 8149 / NCTC 11857 / SLCC 5334 / V8).